Consider the following 311-residue polypeptide: Ribonuclease HIII (311 aa).

An RNase H type-2 domain is found at 95–311; that stretch reads MSIVGSDEVG…NTEKAFRLLK (217 aa). A divalent metal cation-binding residues include Asp-101, Glu-102, and Asp-206.

The protein belongs to the RNase HII family. RnhC subfamily. Mn(2+) serves as cofactor. The cofactor is Mg(2+).

It is found in the cytoplasm. It catalyses the reaction Endonucleolytic cleavage to 5'-phosphomonoester.. Its function is as follows. Endonuclease that specifically degrades the RNA of RNA-DNA hybrids. The sequence is that of Ribonuclease HIII from Bacillus cereus (strain AH187).